Here is a 38-residue protein sequence, read N- to C-terminus: Large ribosomal subunit protein bL36 (38 aa).

The protein belongs to the bacterial ribosomal protein bL36 family.

This Psychrobacter cryohalolentis (strain ATCC BAA-1226 / DSM 17306 / VKM B-2378 / K5) protein is Large ribosomal subunit protein bL36.